A 210-amino-acid chain; its full sequence is MPHFKFYYFDVRGRGEAIRLLFHLADEKFDDERFGMEQWGVLKSEMPLGQVPVLEIDGVKISQTTAIARYLGHQFHRAGTNAVDCARLDMIAEVIQEFMSSSGMGKFSRVLLGMIQANKEQFFKENVLPDVEKYAPIVEKFLLENGNNGLLLGDRETWVDVFAAESFSKLIDYGSPDALDAYPHILALINRVFNHPNIKKYVSQRKATPA.

The GST N-terminal domain occupies 2 to 79 (PHFKFYYFDV…YLGHQFHRAG (78 aa)). Residues tyrosine 8, tryptophan 39, lysine 43, 49–51 (GQV), and 63–64 (QT) contribute to the glutathione site. The GST C-terminal domain maps to 81 to 210 (NAVDCARLDM…YVSQRKATPA (130 aa)).

This sequence belongs to the GST superfamily. Sigma family.

It carries out the reaction RX + glutathione = an S-substituted glutathione + a halide anion + H(+). Conjugation of reduced glutathione to a wide number of exogenous and endogenous hydrophobic electrophiles. The protein is Probable glutathione S-transferase gst-36 (gst-36) of Caenorhabditis elegans.